Reading from the N-terminus, the 179-residue chain is uncharacterized protein (179 aa).

The disordered stretch occupies residues 1 to 32 (MELQGAQEDLGISLSSPRRNHETRPGSKAKGR).

This is an uncharacterized protein from Homo sapiens (Human).